The chain runs to 94 residues: DASH complex subunit dad2 (94 aa).

Positions 18 to 38 (KLRDSSNDMVQQIETLAAKLE) form a coiled coil. Residues 72-94 (VRIPPSTSNTNASATEQGDVEEV) are disordered. A compositionally biased stretch (polar residues) spans 76–87 (PSTSNTNASATE).

This sequence belongs to the DASH complex DAD2 family. As to quaternary structure, component of the DASH complex consisting of ask1, dad1, dad2, dad3, dad4, dam1, duo1, dad5, spc19 and spc34, with a stoichiometry of one copy of each subunit per complex. Multiple DASH complexes oligomerize to form a ring that encircles spindle microtubules and organizes the rod-like NDC80 complexes of the outer kinetochore. DASH complex oligomerization strengthens microtubule attachments. On cytoplasmic microtubules, DASH complexes appear to form patches instead of rings.

Its subcellular location is the nucleus. It localises to the cytoplasm. It is found in the cytoskeleton. The protein localises to the spindle. The protein resides in the chromosome. Its subcellular location is the centromere. It localises to the kinetochore. In terms of biological role, component of the DASH complex that connects microtubules with kinetochores and couples microtubule depolymerisation to chromosome movement; it is involved in retrieving kinetochores to the spindle poles before their re-orientation on the spindle in early mitosis and allows microtubule depolymerization to pull chromosomes apart and resist detachment during anaphase. Kinetochores, consisting of a centromere-associated inner segment and a microtubule-contacting outer segment, play a crucial role in chromosome segregation by mediating the physical connection between centromeric DNA and microtubules. Kinetochores also serve as an input point for the spindle assembly checkpoint, which delays anaphase until all chromosomes have bioriented on the mitotic spindle. The DASH complex mediates bipolar kinetochore-microtubule attachments and facilitates the formation of additional interactions between outer kinetochore components and spindle microtubules. During chromosome movement along the microtubule, it is required both for the sliding of kinetochores along the lateral side of the microtubule and also for microtubule end-on pulling on the kinetochore. Modulates cytoplasmic microtubule dynamics by tracking the plus-end of shortening microtubules and slowing their depolymerization. This chain is DASH complex subunit dad2, found in Schizosaccharomyces pombe (strain 972 / ATCC 24843) (Fission yeast).